The following is a 439-amino-acid chain: Branched-chain amino acid permease BrnQ (439 aa).

At M1–D9 the chain is on the cytoplasmic side. The helical transmembrane segment at I10 to P30 threads the bilayer. The Periplasmic portion of the chain corresponds to P31–T43. Residues A44–A64 form a helical membrane-spanning segment. Residues K65–K79 lie on the Cytoplasmic side of the membrane. Residues V80 to P100 traverse the membrane as a helical segment. The Periplasmic portion of the chain corresponds to R101 to S118. A helical transmembrane segment spans residues A119 to Y139. Residues P140–N149 lie on the Cytoplasmic side of the membrane. A helical transmembrane segment spans residues F150–P170. Residues A171–G189 lie on the Periplasmic side of the membrane. Residues F190–V210 traverse the membrane as a helical segment. The Cytoplasmic segment spans residues N211 to R226. Residues Y227–F247 traverse the membrane as a helical segment. Residues R248–G277 lie on the Periplasmic side of the membrane. The helical transmembrane segment at A278–L298 threads the bilayer. Topologically, residues T299 to T316 are cytoplasmic. The helical transmembrane segment at L317–I337 threads the bilayer. A topological domain (periplasmic) is located at residue Q338. A helical transmembrane segment spans residues I339–F359. Residues T360–R369 lie on the Cytoplasmic side of the membrane. Residues I370–S390 form a helical membrane-spanning segment. Residues A391 to P404 are Periplasmic-facing. A helical transmembrane segment spans residues L405 to I425. Over W426–H439 the chain is Cytoplasmic.

This sequence belongs to the branched chain amino acid transporter family.

The protein resides in the cell inner membrane. Its function is as follows. Liv-II branched chain amino acid transport system, which transports leucine, valine and isoleucine. The sequence is that of Branched-chain amino acid permease BrnQ from Salmonella typhimurium (strain LT2 / SGSC1412 / ATCC 700720).